Reading from the N-terminus, the 630-residue chain is Elongation factor 4 (630 aa).

A disordered region spans residues 1 to 22 (MTVARNRAGAGPGKGSPISSFA). The tr-type G domain maps to 30 to 211 (ARIRNFCIIA…EVVRQVPAPV (182 aa)). GTP contacts are provided by residues 42–47 (DHGKST) and 158–161 (NKID).

It belongs to the TRAFAC class translation factor GTPase superfamily. Classic translation factor GTPase family. LepA subfamily.

It localises to the cell membrane. It catalyses the reaction GTP + H2O = GDP + phosphate + H(+). Functionally, required for accurate and efficient protein synthesis under certain stress conditions. May act as a fidelity factor of the translation reaction, by catalyzing a one-codon backward translocation of tRNAs on improperly translocated ribosomes. Back-translocation proceeds from a post-translocation (POST) complex to a pre-translocation (PRE) complex, thus giving elongation factor G a second chance to translocate the tRNAs correctly. Binds to ribosomes in a GTP-dependent manner. This chain is Elongation factor 4, found in Rhodococcus jostii (strain RHA1).